We begin with the raw amino-acid sequence, 715 residues long: Elongation factor G (715 aa).

Positions 8–290 (NRYRNIGICA…AVIDFLPAPT (283 aa)) constitute a tr-type G domain. Residues 17–24 (AHVDAGKT), 88–92 (DTPGH), and 142–145 (NKMD) each bind GTP.

It belongs to the TRAFAC class translation factor GTPase superfamily. Classic translation factor GTPase family. EF-G/EF-2 subfamily.

It localises to the cytoplasm. In terms of biological role, catalyzes the GTP-dependent ribosomal translocation step during translation elongation. During this step, the ribosome changes from the pre-translocational (PRE) to the post-translocational (POST) state as the newly formed A-site-bound peptidyl-tRNA and P-site-bound deacylated tRNA move to the P and E sites, respectively. Catalyzes the coordinated movement of the two tRNA molecules, the mRNA and conformational changes in the ribosome. The protein is Elongation factor G of Ectopseudomonas mendocina (strain ymp) (Pseudomonas mendocina).